A 210-amino-acid polypeptide reads, in one-letter code: Leucyl/phenylalanyl-tRNA--protein transferase (210 aa).

It belongs to the L/F-transferase family.

It is found in the cytoplasm. The catalysed reaction is N-terminal L-lysyl-[protein] + L-leucyl-tRNA(Leu) = N-terminal L-leucyl-L-lysyl-[protein] + tRNA(Leu) + H(+). The enzyme catalyses N-terminal L-arginyl-[protein] + L-leucyl-tRNA(Leu) = N-terminal L-leucyl-L-arginyl-[protein] + tRNA(Leu) + H(+). It catalyses the reaction L-phenylalanyl-tRNA(Phe) + an N-terminal L-alpha-aminoacyl-[protein] = an N-terminal L-phenylalanyl-L-alpha-aminoacyl-[protein] + tRNA(Phe). Functionally, functions in the N-end rule pathway of protein degradation where it conjugates Leu, Phe and, less efficiently, Met from aminoacyl-tRNAs to the N-termini of proteins containing an N-terminal arginine or lysine. The sequence is that of Leucyl/phenylalanyl-tRNA--protein transferase from Ruegeria pomeroyi (strain ATCC 700808 / DSM 15171 / DSS-3) (Silicibacter pomeroyi).